We begin with the raw amino-acid sequence, 429 residues long: D-amino acid dehydrogenase (429 aa).

Position 3-17 (3-17 (VLILGSGVIGTTTAW)) interacts with FAD.

Belongs to the DadA oxidoreductase family. Requires FAD as cofactor.

The catalysed reaction is a D-alpha-amino acid + A + H2O = a 2-oxocarboxylate + AH2 + NH4(+). It functions in the pathway amino-acid degradation; D-alanine degradation; NH(3) and pyruvate from D-alanine: step 1/1. Its function is as follows. Oxidative deamination of D-amino acids. This is D-amino acid dehydrogenase from Xanthomonas campestris pv. campestris (strain B100).